The sequence spans 128 residues: UPF0102 protein MAV_3752 (128 aa).

Belongs to the UPF0102 family.

The protein is UPF0102 protein MAV_3752 of Mycobacterium avium (strain 104).